The sequence spans 597 residues: DNA import protein CedB (597 aa).

A helical membrane pass occupies residues 10 to 30 (VVLLILGIISFNLVFIILAII). An ATP-binding site is contributed by 286–293 (GPTGSGKT).

The protein resides in the cell membrane. In terms of biological role, part of the Ced system, which is involved in DNA import. The sequence is that of DNA import protein CedB from Sulfolobus acidocaldarius (strain ATCC 33909 / DSM 639 / JCM 8929 / NBRC 15157 / NCIMB 11770).